The chain runs to 420 residues: Senescence-associated protein SPA15, chloroplastic (420 aa).

Residues 1-68 (MAKPNGIIYS…YIATRGSSLR (68 aa)) constitute a chloroplast transit peptide. The disordered stretch occupies residues 85–111 (EYRDSSDTSSMQGKDKDPASLGKSGTP).

It belongs to the ATA15/OSA15 family. Expressed in leaves.

Its subcellular location is the plastid. The protein resides in the chloroplast. May be involved in the regulation of leaf senescence. In Ipomoea batatas (Sweet potato), this protein is Senescence-associated protein SPA15, chloroplastic.